The sequence spans 356 residues: tRNA (guanine(26)-N(2))-dimethyltransferase (356 aa).

Residues 5–352 (VLRREGTVEF…VSAGEVERVL (348 aa)) form the Trm1 methyltransferase domain. Positions 40, 67, 85, 111, and 112 each coordinate S-adenosyl-L-methionine.

Belongs to the class I-like SAM-binding methyltransferase superfamily. Trm1 family.

It catalyses the reaction guanosine(26) in tRNA + 2 S-adenosyl-L-methionine = N(2)-dimethylguanosine(26) in tRNA + 2 S-adenosyl-L-homocysteine + 2 H(+). Functionally, dimethylates a single guanine residue at position 26 of a number of tRNAs using S-adenosyl-L-methionine as donor of the methyl groups. The polypeptide is tRNA (guanine(26)-N(2))-dimethyltransferase (Pyrobaculum arsenaticum (strain DSM 13514 / JCM 11321 / PZ6)).